Reading from the N-terminus, the 792-residue chain is Phenylalanine--tRNA ligase beta subunit (792 aa).

Positions 39–147 constitute a tRNA-binding domain; the sequence is GESLGQVVVA…DDAPVGQALA (109 aa). Residues 400–475 form the B5 domain; the sequence is PQPARILLRR…RIHGYDRVPT (76 aa). 4 residues coordinate Mg(2+): Asp453, Asp459, Glu462, and Asp463. In terms of domain architecture, FDX-ACB spans 698–791; it reads SRFPSVRRDL…IEREHRARIR (94 aa).

The protein belongs to the phenylalanyl-tRNA synthetase beta subunit family. Type 1 subfamily. Tetramer of two alpha and two beta subunits. It depends on Mg(2+) as a cofactor.

It localises to the cytoplasm. The enzyme catalyses tRNA(Phe) + L-phenylalanine + ATP = L-phenylalanyl-tRNA(Phe) + AMP + diphosphate + H(+). The polypeptide is Phenylalanine--tRNA ligase beta subunit (Xanthomonas oryzae pv. oryzae (strain KACC10331 / KXO85)).